Reading from the N-terminus, the 464-residue chain is Argininosuccinate lyase (464 aa).

The protein belongs to the lyase 1 family. Argininosuccinate lyase subfamily.

Its subcellular location is the cytoplasm. The catalysed reaction is 2-(N(omega)-L-arginino)succinate = fumarate + L-arginine. Its pathway is amino-acid biosynthesis; L-arginine biosynthesis; L-arginine from L-ornithine and carbamoyl phosphate: step 3/3. The sequence is that of Argininosuccinate lyase from Pseudomonas putida (strain GB-1).